Reading from the N-terminus, the 466-residue chain is Trigger factor (466 aa).

Positions 166–245 (GDFAQIDLVA…LNAVKERELP (80 aa)) constitute a PPIase FKBP-type domain. 2 disordered regions span residues 313–332 (LEQESRLEDDEHRAEVTESS) and 424–466 (LPDD…AADK). The span at 426–444 (DDGEAVDEDATPEDTDAPA) shows a compositional bias: acidic residues. A compositionally biased stretch (basic residues) spans 453–466 (PKKKAAAKKKAADK).

It belongs to the FKBP-type PPIase family. Tig subfamily.

Its subcellular location is the cytoplasm. It catalyses the reaction [protein]-peptidylproline (omega=180) = [protein]-peptidylproline (omega=0). In terms of biological role, involved in protein export. Acts as a chaperone by maintaining the newly synthesized protein in an open conformation. Functions as a peptidyl-prolyl cis-trans isomerase. The protein is Trigger factor of Leifsonia xyli subsp. xyli (strain CTCB07).